We begin with the raw amino-acid sequence, 118 residues long: Urease subunit beta (118 aa).

Belongs to the urease beta subunit family. In terms of assembly, heterotrimer of UreA (gamma), UreB (beta) and UreC (alpha) subunits. Three heterotrimers associate to form the active enzyme.

Its subcellular location is the cytoplasm. It catalyses the reaction urea + 2 H2O + H(+) = hydrogencarbonate + 2 NH4(+). It functions in the pathway nitrogen metabolism; urea degradation; CO(2) and NH(3) from urea (urease route): step 1/1. The polypeptide is Urease subunit beta (Aliivibrio fischeri (strain ATCC 700601 / ES114) (Vibrio fischeri)).